The primary structure comprises 274 residues: Bis(5'-nucleosyl)-tetraphosphatase, symmetrical (274 aa).

This sequence belongs to the Ap4A hydrolase family.

It carries out the reaction P(1),P(4)-bis(5'-adenosyl) tetraphosphate + H2O = 2 ADP + 2 H(+). Hydrolyzes diadenosine 5',5'''-P1,P4-tetraphosphate to yield ADP. The protein is Bis(5'-nucleosyl)-tetraphosphatase, symmetrical of Buchnera aphidicola subsp. Acyrthosiphon pisum (strain 5A).